A 172-amino-acid polypeptide reads, in one-letter code: Diphosphoinositol polyphosphate phosphohydrolase 1 (172 aa).

Methionine 1 bears the N-acetylmethionine mark. Residues arginine 10, 18 to 20 (KKR), and 39 to 41 (SSR) each bind substrate. In terms of domain architecture, Nudix hydrolase spans 17–142 (YKKRAACLCF…KPVQASYFET (126 aa)). The Mg(2+) site is built by glycine 50 and glutamate 66. Residues 51–72 (GGMEPEEEPSVAAVREVCEEAG) carry the Nudix box motif. Catalysis depends on glutamate 69, which acts as the Proton acceptor. Glutamate 70 lines the Mg(2+) pocket. Substrate is bound by residues 89–91 (RKH), arginine 115, and lysine 133.

This sequence belongs to the Nudix hydrolase family. DIPP subfamily. In terms of assembly, monomer. Requires Mg(2+) as cofactor. It depends on Mn(2+) as a cofactor. Zn(2+) serves as cofactor. Widely expressed. Expressed at higher level in brain, heart, pancreas and liver. Also expressed in placenta, lung and kidney.

It localises to the cytoplasm. Its subcellular location is the nucleus. It carries out the reaction diphospho-myo-inositol polyphosphate + H2O = myo-inositol polyphosphate + phosphate.. The catalysed reaction is 5-diphospho-1D-myo-inositol 1,2,3,4,6-pentakisphosphate + H2O = 1D-myo-inositol hexakisphosphate + phosphate + H(+). The enzyme catalyses 3,5-bis(diphospho)-1D-myo-inositol 1,2,4,6-tetrakisphosphate + H2O = 3-diphospho-1D-myo-inositol 1,2,4,5,6-pentakisphosphate + phosphate + 2 H(+). It catalyses the reaction [phosphate](n+1) + n H2O = (n+1) phosphate + n H(+). It carries out the reaction P(1),P(5)-bis(5'-adenosyl) pentaphosphate + H2O = ADP + ATP + 2 H(+). The catalysed reaction is P(1),P(6)-bis(5'-adenosyl) hexaphosphate + H2O = 2 ATP + 2 H(+). The enzyme catalyses P(1),P(4)-bis(5'-adenosyl) tetraphosphate + H2O = AMP + ATP + 2 H(+). It catalyses the reaction a 5'-end (N(7)-methyl 5'-triphosphoguanosine)-ribonucleoside in mRNA + H2O = N(7)-methyl-GMP + a 5'-end diphospho-ribonucleoside in mRNA + 2 H(+). It carries out the reaction a 5'-end (N(7)-methyl 5'-triphosphoguanosine)-ribonucleoside in mRNA + H2O = N(7)-methyl-GDP + a 5'-end phospho-ribonucleoside in mRNA + 2 H(+). Its activity is regulated as follows. Endopolyphospahatase activity is inhibited by NaF, NaPPi, beta-glycerol phosphate and heparin. 5-diphosphoinositol pentakisphosphate (5-InsP7) inhibits its mRNA decapping activity. Cleaves a beta-phosphate from the diphosphate groups in PP-InsP5 (diphosphoinositol pentakisphosphate) and [PP]2-InsP4 (bisdiphosphoinositol tetrakisphosphate), suggesting that it may play a role in signal transduction. InsP6 (inositol hexakisphosphate) is not a substrate. Acts as a negative regulator of the ERK1/2 pathway. Also able to catalyze the hydrolysis of dinucleoside oligophosphates, with diadenosine 5',5'''-P1,P6-hexaphosphate (Ap6A) and diadenosine 5',5'''- P1,P5-pentaphosphate (Ap5A) being the preferred substrates. The major reaction products are ADP and p4a from Ap6A and ADP and ATP from Ap5A. Also able to hydrolyze 5-phosphoribose 1-diphosphate. Acts as a decapping enzyme that modulates the stability of a subset of mRNAs implicated in cell motility. Hydrolyzes monomethylated capped RNA after both the alpha- and beta-phosphates generating m7GMP + ppRNA and m7GDP + pRNA. Can hydrolyze unmethylated capped RNAs. Divalent cations zinc, magnesium and manganese determine its substrate specificity. Exhibits diphosphoinositol polyphosphate phosphohydrolase in the presence of magnesium ions, diadenosine hexaphosphate hydrolase activity in the presence of manganese ions and endopolyphosphatase activity in the presence of zinc ions. Plays an important role in limiting DNA damage and maintaining cell survival upon oxidative stress via its endopolyphosphatase activity. The polypeptide is Diphosphoinositol polyphosphate phosphohydrolase 1 (Homo sapiens (Human)).